Reading from the N-terminus, the 301-residue chain is Quinolinate synthase (301 aa).

Residues histidine 21 and serine 38 each contribute to the iminosuccinate site. Position 83 (cysteine 83) interacts with [4Fe-4S] cluster. Residues 109–111 and serine 126 contribute to the iminosuccinate site; that span reads YIN. Position 169 (cysteine 169) interacts with [4Fe-4S] cluster. Iminosuccinate-binding positions include 195 to 197 and threonine 212; that span reads HPE. Cysteine 257 is a binding site for [4Fe-4S] cluster.

It belongs to the quinolinate synthase family. Type 2 subfamily. It depends on [4Fe-4S] cluster as a cofactor.

It localises to the cytoplasm. It catalyses the reaction iminosuccinate + dihydroxyacetone phosphate = quinolinate + phosphate + 2 H2O + H(+). It functions in the pathway cofactor biosynthesis; NAD(+) biosynthesis; quinolinate from iminoaspartate: step 1/1. Functionally, catalyzes the condensation of iminoaspartate with dihydroxyacetone phosphate to form quinolinate. This is Quinolinate synthase from Clostridium perfringens (strain ATCC 13124 / DSM 756 / JCM 1290 / NCIMB 6125 / NCTC 8237 / Type A).